The sequence spans 493 residues: Mitochondrial distribution and morphology protein 10 (493 aa).

This sequence belongs to the MDM10 family. As to quaternary structure, component of the ER-mitochondria encounter structure (ERMES) or MDM complex, composed of MMM1, MDM10, MDM12 and MDM34. Associates with the mitochondrial outer membrane sorting assembly machinery SAM(core) complex, which consists of SAM35, SAM37 and SAM50, to form a SAM(holo) complex.

Its subcellular location is the mitochondrion outer membrane. Its function is as follows. Component of the ERMES/MDM complex, which serves as a molecular tether to connect the endoplasmic reticulum and mitochondria. Components of this complex are involved in the control of mitochondrial shape and protein biogenesis and may function in phospholipid exchange. MDM10 is involved in the late assembly steps of the general translocase of the mitochondrial outer membrane (TOM complex). Functions in the TOM40-specific route of the assembly of outer membrane beta-barrel proteins, including the association of TOM40 with the receptor TOM22 and small TOM proteins. Can associate with the SAM(core) complex as well as the MDM12-MMM1 complex, both involved in late steps of the major beta-barrel assembly pathway, that is responsible for biogenesis of all outer membrane beta-barrel proteins. May act as a switch that shuttles between both complexes and channels precursor proteins into the TOM40-specific pathway. Plays a role in mitochondrial morphology and in the inheritance of mitochondria. This Saccharomyces cerevisiae (strain ATCC 204508 / S288c) (Baker's yeast) protein is Mitochondrial distribution and morphology protein 10.